Consider the following 184-residue polypeptide: Cytosolic Prostaglandin E synthase (184 aa).

The CS domain occupies 7-96 (LIPPPVSWAQ…AAGPYWSSLT (90 aa)). Positions 115-184 (ESDDEEGDQK…EGDKEKKPAA (70 aa)) are disordered. 5 positions are modified to phosphoserine: serine 116, serine 127, serine 135, serine 156, and serine 162. Over residues 147 to 158 (FNVDDEEEDSDD) the composition is skewed to acidic residues. Basic and acidic residues predominate over residues 175–184 (EGDKEKKPAA).

Belongs to the p23/wos2 family.

Its subcellular location is the cytoplasm. The enzyme catalyses prostaglandin H2 = prostaglandin E2. Its function is as follows. Cytosolic prostaglandin synthase that catalyzes the oxidoreduction of prostaglandin endoperoxide H2 (PGH2) to prostaglandin E2 (PGE2). Through production of PGE2 may regulate the activity of non-muscle myosin II in an autocrine or paracrine fashion; this may influence border cell and nurse cell stiffness to facilitate border cell migration during oogenesis. The protein is Cytosolic Prostaglandin E synthase of Drosophila melanogaster (Fruit fly).